Here is a 529-residue protein sequence, read N- to C-terminus: Ribonuclease Y (529 aa).

The helical transmembrane segment at 4 to 24 (GLIYISLEVIVACLISALAMY) threads the bilayer. A KH domain is found at 216–297 (FTNRIALPCS…NRIEEVYHRV (82 aa)). The 94-residue stretch at 342–435 (ALQHSKEVAL…VCAADALSAG (94 aa)) folds into the HD domain.

The protein belongs to the RNase Y family.

The protein resides in the cell membrane. Its function is as follows. Endoribonuclease that initiates mRNA decay. The polypeptide is Ribonuclease Y (Helicobacter acinonychis (strain Sheeba)).